A 421-amino-acid polypeptide reads, in one-letter code: Trimethyllysine dioxygenase, mitochondrial (421 aa).

Residues 1–15 (MWYHRLSHLHSRLQD) constitute a mitochondrion transit peptide. An N6-acetyllysine mark is found at K179 and K236. Fe cation-binding residues include H242, D244, and H389.

This sequence belongs to the gamma-BBH/TMLD family. Homodimer. Requires Fe(2+) as cofactor. L-ascorbate is required as a cofactor. As to expression, all isoforms, but isoform 8, are widely expressed in adult and fetal tissues. Isoform 8 is restricted to heart and skeletal muscle.

The protein resides in the mitochondrion matrix. It carries out the reaction N(6),N(6),N(6)-trimethyl-L-lysine + 2-oxoglutarate + O2 = (3S)-3-hydroxy-N(6),N(6),N(6)-trimethyl-L-lysine + succinate + CO2. The protein operates within amine and polyamine biosynthesis; carnitine biosynthesis. Converts trimethyllysine (TML) into hydroxytrimethyllysine (HTML). In Homo sapiens (Human), this protein is Trimethyllysine dioxygenase, mitochondrial (TMLHE).